The primary structure comprises 290 residues: Ig delta chain C region membrane-bound form (290 aa).

The Ig-like 1 domain maps to 5–105 (PDMFLLSECK…WDSQSSKRVT (101 aa)). Residues Cys-26 and Cys-78 are joined by a disulfide bond. Asn-58 and Asn-75 each carry an N-linked (GlcNAc...) asparagine glycan. The tract at residues 89–111 (PFKFPESWDSQSSKRVTPTLQAK) is disordered. The span at 96-111 (WDSQSSKRVTPTLQAK) shows a compositional bias: polar residues. N-linked (GlcNAc...) asparagine glycans are attached at residues Asn-112, Asn-135, and Asn-227. Positions 133–233 (PSNLTVNILT…TKLNASKSLA (101 aa)) constitute an Ig-like 2 domain. A helical membrane pass occupies residues 262–279 (GLWPTMCTFVALFLLTLL). Topologically, residues 280-290 (YSGFVTFIKVK) are cytoplasmic.

In terms of tissue distribution, cell lines producing IgD contain several mRNA species for Ig delta chains. In plasmacytomas, the secreted form is the major component, and the membrane-bound form is a minor component. In spleen, however, the membrane-bound form is the major component. These two forms differ in their C-terminal segments.

Its subcellular location is the cell membrane. The chain is Ig delta chain C region membrane-bound form from Mus musculus (Mouse).